The primary structure comprises 369 residues: S-(hydroxymethyl)glutathione dehydrogenase (369 aa).

Residues Cys40, His62, Cys92, Cys95, Cys98, Cys106, and Cys169 each contribute to the Zn(2+) site.

Belongs to the zinc-containing alcohol dehydrogenase family. Class-III subfamily. In terms of assembly, homodimer. Zn(2+) serves as cofactor.

It is found in the cytoplasm. The enzyme catalyses S-(hydroxymethyl)glutathione + NADP(+) = S-formylglutathione + NADPH + H(+). The catalysed reaction is S-(hydroxymethyl)glutathione + NAD(+) = S-formylglutathione + NADH + H(+). It carries out the reaction a primary alcohol + NAD(+) = an aldehyde + NADH + H(+). It catalyses the reaction a secondary alcohol + NAD(+) = a ketone + NADH + H(+). The enzyme catalyses S-nitrosoglutathione + NADH + H(+) = S-(hydroxysulfenamide)glutathione + NAD(+). In terms of biological role, has high formaldehyde dehydrogenase activity in the presence of glutathione and catalyzes the oxidation of normal alcohols in a reaction that is not GSH-dependent. In addition, hemithiolacetals other than those formed from GSH, including omega-thiol fatty acids, also are substrates. Also acts as a S-nitroso-glutathione reductase by catalyzing the NADH-dependent reduction of S-nitrosoglutathione. The sequence is that of S-(hydroxymethyl)glutathione dehydrogenase (frmA) from Photobacterium damsela subsp. piscicida (Pasteurella piscicida).